Reading from the N-terminus, the 443-residue chain is Probable D-serine dehydratase (443 aa).

Residue Lys-118 is modified to N6-(pyridoxal phosphate)lysine.

Belongs to the serine/threonine dehydratase family. DsdA subfamily. The cofactor is pyridoxal 5'-phosphate.

The enzyme catalyses D-serine = pyruvate + NH4(+). The polypeptide is Probable D-serine dehydratase (Aeromonas salmonicida (strain A449)).